The chain runs to 449 residues: MIHGKTLEAWQQSHPIIAELVALKPTSWFNPGIAKAAEALHDVGLTAADVQAASARLLRFAPYLATVFPETAAAGGVIESPVIPLPQLRRVLVEEGSLQNAGSLWLKADSDLPISGSIKARGGIHEVLKHAEDLALAAGLITPTDDYTKLASDQARAFFSQYTIAVGSTGNLGLSIGIMSAKLGFQVSVHMSSDARQWKKDKLRANGVTVVEHASDYSVAVEQGRQQAASDPRCYFVDDENSPQLFLGYAVAAERLARQFDQAGIQVNADHPLFVYLPCGVGGGPGGVAFGLKLVFGDAVHCIFAEPTHSPCMLLGVYTGLHDETSVQDFGIDNITAADGLAVGRPSGFVGKAMQRLIDGYYTVADEELYRLMVIAHEQDKVKLEPSALAGVPGMLRVLQAGEYLARQGFTPTQLQQATHLVWGTGGSMVPDDEFNTYLAKGRSLQANV.

K119 carries the N6-(pyridoxal phosphate)lysine modification.

It belongs to the serine/threonine dehydratase family. DsdA subfamily. It depends on pyridoxal 5'-phosphate as a cofactor.

It catalyses the reaction D-serine = pyruvate + NH4(+). This Pseudomonas putida (strain ATCC 700007 / DSM 6899 / JCM 31910 / BCRC 17059 / LMG 24140 / F1) protein is Probable D-serine dehydratase.